The chain runs to 267 residues: Fibroin light chain (267 aa).

A signal peptide spans 1 to 16 (MLPFVLVLLVATSALA). Serine 19 bears the N-acetylserine; in short form mark. Residues cysteine 103 and cysteine 162 are joined by a disulfide bond.

Silk fibroin elementary unit consists in a disulfide-linked heavy and light chain and a p25 glycoprotein in molar ratios of 6:6:1. This results in a complex of approximately 2.3 MDa. Partially N-terminally processed to yield a short form which lacks the first two residues of the long form. Post-translationally, the interchain disulfide bridge is essential for the intracellular transport and secretion of fibroin. In terms of tissue distribution, produced exclusively in the posterior (PSG) section of silk glands, which are essentially modified salivary glands.

The protein resides in the secreted. Functionally, it is likely that the major role of L-chain is to prevent the retention of H-chain in ER by forming the disulfide linkage. This Galleria mellonella (Greater wax moth) protein is Fibroin light chain (FIBL).